The primary structure comprises 88 residues: Small ribosomal subunit protein bS16c (88 aa).

It belongs to the bacterial ribosomal protein bS16 family.

The protein localises to the plastid. It is found in the chloroplast. In Solanum bulbocastanum (Wild potato), this protein is Small ribosomal subunit protein bS16c.